The following is a 369-amino-acid chain: DNA replication and repair protein RecF (369 aa).

ATP is bound at residue G30–T37.

It belongs to the RecF family.

The protein resides in the cytoplasm. The RecF protein is involved in DNA metabolism; it is required for DNA replication and normal SOS inducibility. RecF binds preferentially to single-stranded, linear DNA. It also seems to bind ATP. In Streptococcus agalactiae serotype Ia (strain ATCC 27591 / A909 / CDC SS700), this protein is DNA replication and repair protein RecF.